The sequence spans 134 residues: Small ribosomal subunit protein uS11 (134 aa).

This sequence belongs to the universal ribosomal protein uS11 family. Part of the 30S ribosomal subunit. Interacts with proteins S7 and S18. Binds to IF-3.

Located on the platform of the 30S subunit, it bridges several disparate RNA helices of the 16S rRNA. Forms part of the Shine-Dalgarno cleft in the 70S ribosome. The sequence is that of Small ribosomal subunit protein uS11 from Delftia acidovorans (strain DSM 14801 / SPH-1).